The sequence spans 170 residues: Small ribosomal subunit protein bS18c (170 aa).

Disordered stretches follow at residues 1–60 (MYTS…GPGD) and 149–170 (NRNLRNNNQNLRNNNRNLSSDC). 7 repeats span residues 4–10 (SKQPFLK), 11–17 (SKQPFSK), 18–24 (SEQPFSK), 25–31 (SEQPFRK), 32–38 (SKQTFRK), 39–45 (FKQPFRK), and 46–52 (SKQPFRR). The interval 4-52 (SKQPFLKSKQPFSKSEQPFSKSEQPFRKSKQTFRKFKQPFRKSKQPFRR) is 7 X 7 AA tandem repeats. Polar residues predominate over residues 13–26 (QPFSKSEQPFSKSE). Over residues 30–55 (RKSKQTFRKFKQPFRKSKQPFRRRPR) the composition is skewed to basic residues.

Belongs to the bacterial ribosomal protein bS18 family. Part of the 30S ribosomal subunit.

It localises to the plastid. It is found in the chloroplast. The protein is Small ribosomal subunit protein bS18c (rps18) of Secale cereale (Rye).